The following is a 237-amino-acid chain: Cyclic-di-GMP-binding biofilm dispersal mediator protein (237 aa).

NAD(+) is bound at residue 10 to 34 (LILGGSRGIGAAIVRRFVTDGANVR). Ser132 provides a ligand contact to substrate. Tyr146 functions as the Proton acceptor in the catalytic mechanism.

Belongs to the short-chain dehydrogenases/reductases (SDR) family.

Its function is as follows. Increases biofilm dispersal. Acts by binding directly to the signaling molecule cyclic-di-GMP, which decreases the intracellular concentration of cyclic-di-GMP and leads to biofilm dispersal. Also controls other biofilm-related phenotypes such as cell motility, cell size, cell aggregation and production of extracellular DNA and extracellular polysaccharides (EPS). Does not act as a phosphodiesterase. This Escherichia coli (strain K12) protein is Cyclic-di-GMP-binding biofilm dispersal mediator protein (bdcA).